Consider the following 195-residue polypeptide: Acireductone dioxygenase 2 (195 aa).

Fe(2+) is bound by residues His-94, His-96, Glu-100, and His-139. Ni(2+) contacts are provided by His-94, His-96, Glu-100, and His-139.

This sequence belongs to the acireductone dioxygenase (ARD) family. It depends on Fe(2+) as a cofactor. Ni(2+) is required as a cofactor.

It localises to the cytoplasm. The protein localises to the nucleus. It catalyses the reaction 1,2-dihydroxy-5-(methylsulfanyl)pent-1-en-3-one + O2 = 4-methylsulfanyl-2-oxobutanoate + formate + 2 H(+). The catalysed reaction is 1,2-dihydroxy-5-(methylsulfanyl)pent-1-en-3-one + O2 = 3-(methylsulfanyl)propanoate + CO + formate + 2 H(+). It functions in the pathway amino-acid biosynthesis; L-methionine biosynthesis via salvage pathway; L-methionine from S-methyl-5-thio-alpha-D-ribose 1-phosphate: step 5/6. In terms of biological role, catalyzes 2 different reactions between oxygen and the acireductone 1,2-dihydroxy-3-keto-5-methylthiopentene (DHK-MTPene) depending upon the metal bound in the active site. Fe-containing acireductone dioxygenase (Fe-ARD) produces formate and 2-keto-4-methylthiobutyrate (KMTB), the alpha-ketoacid precursor of methionine in the methionine recycle pathway. Ni-containing acireductone dioxygenase (Ni-ARD) produces methylthiopropionate, carbon monoxide and formate, and does not lie on the methionine recycle pathway. This chain is Acireductone dioxygenase 2, found in Physcomitrium patens (Spreading-leaved earth moss).